A 98-amino-acid polypeptide reads, in one-letter code: NADH-ubiquinone oxidoreductase chain 4L (98 aa).

The next 3 membrane-spanning stretches (helical) occupy residues Met-1 to Ile-21, Leu-26 to Val-46, and Ile-61 to Ile-81.

This sequence belongs to the complex I subunit 4L family. In terms of assembly, core subunit of respiratory chain NADH dehydrogenase (Complex I) which is composed of 45 different subunits.

Its subcellular location is the mitochondrion inner membrane. It catalyses the reaction a ubiquinone + NADH + 5 H(+)(in) = a ubiquinol + NAD(+) + 4 H(+)(out). Core subunit of the mitochondrial membrane respiratory chain NADH dehydrogenase (Complex I) which catalyzes electron transfer from NADH through the respiratory chain, using ubiquinone as an electron acceptor. Part of the enzyme membrane arm which is embedded in the lipid bilayer and involved in proton translocation. In Papio hamadryas (Hamadryas baboon), this protein is NADH-ubiquinone oxidoreductase chain 4L (MT-ND4L).